The chain runs to 299 residues: Probable lipid kinase YegS (299 aa).

In terms of domain architecture, DAGKc spans 2–133; it reads ANFPASLLIL…IDMARVNDKT (132 aa). ATP-binding positions include threonine 40, 66–72, and threonine 95; that span reads GDGTINE. 3 residues coordinate Mg(2+): leucine 215, aspartate 218, and leucine 220. Glutamate 271 acts as the Proton acceptor in catalysis.

This sequence belongs to the diacylglycerol/lipid kinase family. YegS lipid kinase subfamily. The cofactor is Mg(2+). Ca(2+) serves as cofactor.

It is found in the cytoplasm. Functionally, probably phosphorylates lipids; the in vivo substrate is unknown. The chain is Probable lipid kinase YegS from Salmonella gallinarum (strain 287/91 / NCTC 13346).